Here is a 242-residue protein sequence, read N- to C-terminus: ATP-dependent dethiobiotin synthetase BioD (242 aa).

Residue 12-17 participates in ATP binding; sequence EVGKTV. Residue T16 coordinates Mg(2+). The active site involves K37. Position 41 (S41) interacts with substrate. ATP is bound by residues D51 and 112–115; that span reads EGAG. Mg(2+) is bound by residues D51 and E112.

It belongs to the dethiobiotin synthetase family. As to quaternary structure, homodimer. Requires Mg(2+) as cofactor.

Its subcellular location is the cytoplasm. The enzyme catalyses (7R,8S)-7,8-diammoniononanoate + CO2 + ATP = (4R,5S)-dethiobiotin + ADP + phosphate + 3 H(+). It participates in cofactor biosynthesis; biotin biosynthesis; biotin from 7,8-diaminononanoate: step 1/2. Catalyzes a mechanistically unusual reaction, the ATP-dependent insertion of CO2 between the N7 and N8 nitrogen atoms of 7,8-diaminopelargonic acid (DAPA, also called 7,8-diammoniononanoate) to form a ureido ring. This is ATP-dependent dethiobiotin synthetase BioD from Bacillus cereus (strain G9842).